Consider the following 464-residue polypeptide: Gamma-aminobutyric acid receptor subunit rho-3 (464 aa).

A signal peptide spans 1–15 (MVLAFWLAFFTYTWI). At 16 to 263 (TLMLDASAVK…LFINFVLRRH (248 aa)) the chain is on the extracellular side. Arginine 108 contacts 4-aminobutanoate. N-linked (GlcNAc...) asparagine glycosylation occurs at asparagine 123. 4-aminobutanoate is bound at residue serine 172. A disulfide bridge links cysteine 181 with cysteine 195. N-linked (GlcNAc...) asparagine glycosylation is present at asparagine 194. Glutamate 200 provides a ligand contact to 4-aminobutanoate. Residues 264-284 (IFFFVLQTYFPAMLMVMLSWV) traverse the membrane as a helical segment. Over 285-296 (SFWIDRRAVPAR) the chain is Cytoplasmic. The helical transmembrane segment at 297 to 317 (VSLGITTVLTMSTIVTGVSAS) threads the bilayer. The Extracellular segment spans residues 318 to 328 (MPQVSYVKAVD). A helical membrane pass occupies residues 329-349 (VYMWVSSLFVFLSVIEYAAVN). The segment at 344 to 445 (EYAAVNYLTT…NNHVIDTYSR (102 aa)) is interaction with SQSTM1. The Cytoplasmic segment spans residues 350 to 443 (YLTTVEEWKQ…LENNHVIDTY (94 aa)). The chain crosses the membrane as a helical span at residues 444-464 (SRIVFPVVYIIFNLFYWGIYV).

The protein belongs to the ligand-gated ion channel (TC 1.A.9) family. Gamma-aminobutyric acid receptor (TC 1.A.9.5) subfamily. GABRR3 sub-subfamily. Three rho subunits (rho-1/GBRR1, rho-2/GBRR2 and rho-3/GBRR3) coassemble either to form functional homopentamers or heteropentamers. Forms a ternary complex with SQSTM1 and PRKCZ. In terms of tissue distribution, expressed in retina.

It is found in the postsynaptic cell membrane. It localises to the cell membrane. It catalyses the reaction chloride(in) = chloride(out). With respect to regulation, activated by agonists in the following the potency order: muscimol &gt; TACP &gt; TACA &gt; thiomuscimol &gt; CAMP &gt; CACA, when forming a homopentamer. Inhibited by TPMPA, a rho-specific antagonist, when forming a homopentamer. Inhibited antagonists in the following the potency order: TAMP = TPMPA &gt; P4MPA = THIP &gt; 14AA &gt; 3-APA, when forming a homopentamer. Rho subunit of the pentameric ligand-gated chloride channels responsible for mediating the effects of gamma-aminobutyric acid (GABA), the major inhibitory neurotransmitter in the brain. Rho-containing GABA-gated chloride channels are a subclass of GABA(A) receptors (GABAARs) entirely composed of rho subunits, where GABA molecules bind at the rho intersubunit interfaces. When activated by GABA, rho-GABAARs selectively allow the flow of chloride anions across the cell membrane down their electrochemical gradient. This chain is Gamma-aminobutyric acid receptor subunit rho-3, found in Rattus norvegicus (Rat).